A 239-amino-acid polypeptide reads, in one-letter code: Pimeloyl-[acyl-carrier protein] methyl ester esterase (239 aa).

Residues W20, 77–78 (SM), and 138–142 (FISLQ) contribute to the substrate site. S77 (nucleophile) is an active-site residue. Residues D192 and H220 contribute to the active site. Residue H220 participates in substrate binding.

It belongs to the AB hydrolase superfamily. Carboxylesterase BioH family. In terms of assembly, monomer.

It is found in the cytoplasm. The enzyme catalyses 6-carboxyhexanoyl-[ACP] methyl ester + H2O = 6-carboxyhexanoyl-[ACP] + methanol + H(+). Its pathway is cofactor biosynthesis; biotin biosynthesis. Its function is as follows. The physiological role of BioH is to remove the methyl group introduced by BioC when the pimeloyl moiety is complete. It allows to synthesize pimeloyl-ACP via the fatty acid synthetic pathway through the hydrolysis of the ester bonds of pimeloyl-ACP esters. In Legionella pneumophila (strain Paris), this protein is Pimeloyl-[acyl-carrier protein] methyl ester esterase.